The primary structure comprises 85 residues: UPF0297 protein Clos_1665 (85 aa).

This sequence belongs to the UPF0297 family.

This Alkaliphilus oremlandii (strain OhILAs) (Clostridium oremlandii (strain OhILAs)) protein is UPF0297 protein Clos_1665.